The primary structure comprises 635 residues: Threonine--tRNA ligase (635 aa).

The TGS domain occupies 1-61 (MIKITLKDGK…HKDSSLEILT (61 aa)). Residues 242–532 (DHRKLGKELD…LIEQYAGAFP (291 aa)) are catalytic. Zn(2+)-binding residues include C333, H384, and H509.

The protein belongs to the class-II aminoacyl-tRNA synthetase family. In terms of assembly, homodimer. Zn(2+) serves as cofactor.

It localises to the cytoplasm. It carries out the reaction tRNA(Thr) + L-threonine + ATP = L-threonyl-tRNA(Thr) + AMP + diphosphate + H(+). Its function is as follows. Catalyzes the attachment of threonine to tRNA(Thr) in a two-step reaction: L-threonine is first activated by ATP to form Thr-AMP and then transferred to the acceptor end of tRNA(Thr). Also edits incorrectly charged L-seryl-tRNA(Thr). The polypeptide is Threonine--tRNA ligase (Clostridium botulinum (strain Loch Maree / Type A3)).